Here is a 146-residue protein sequence, read N- to C-terminus: SFLSAEEKGLVNGLWSKVNVDEVGGEALGRLLVVYPWTQRFFQSFGDLSSADAIMSNAKVKAHGKKVLNSFSDGLKNIDDLKGAFAKLSELHCDKLHVDPENFRLLGNVLVCVLAHHFGHEFNPQVQAAFQKVVAGVASALAHRYH.

S1 carries the N-acetylserine modification. The region spanning 2–146 (FLSAEEKGLV…VASALAHRYH (145 aa)) is the Globin domain. Residue K17 is modified to N6-succinyllysine. A phosphoserine mark is found at S44 and S50. N6-succinyllysine is present on K59. Positions 63 and 92 each coordinate heme b. R104 bears the Asymmetric dimethylarginine mark.

This sequence belongs to the globin family. As to quaternary structure, heterotetramer of two alpha chains and two beta chains. As to expression, red blood cells.

Its function is as follows. Involved in oxygen transport from the lung to the various peripheral tissues. The protein is Hemoglobin subunit beta-1 (HBB1) of Panthera leo (Lion).